We begin with the raw amino-acid sequence, 115 residues long: T cell receptor beta variable 18 (115 aa).

The N-terminal stretch at 1–21 is a signal peptide; that stretch reads MDTRLLCCAVICLLGAGLSNA. The 94-residue stretch at 22–115 folds into the Ig-like domain; the sequence is GVMQNPRHLV…SAAYFCASSP (94 aa). Cys-42 and Cys-111 form a disulfide bridge.

As to quaternary structure, alpha-beta TR is a heterodimer composed of an alpha and beta chain; disulfide-linked. The alpha-beta TR is associated with the transmembrane signaling CD3 coreceptor proteins to form the TR-CD3 (TcR or TCR). The assembly of alpha-beta TR heterodimers with CD3 occurs in the endoplasmic reticulum where a single alpha-beta TR heterodimer associates with one CD3D-CD3E heterodimer, one CD3G-CD3E heterodimer and one CD247 homodimer forming a stable octameric structure. CD3D-CD3E and CD3G-CD3E heterodimers preferentially associate with TR alpha and TR beta chains, respectively. The association of the CD247 homodimer is the last step of TcR assembly in the endoplasmic reticulum and is required for transport to the cell surface.

Its subcellular location is the cell membrane. V region of the variable domain of T cell receptor (TR) beta chain that participates in the antigen recognition. Alpha-beta T cell receptors are antigen specific receptors which are essential to the immune response and are present on the cell surface of T lymphocytes. Recognize peptide-major histocompatibility (MH) (pMH) complexes that are displayed by antigen presenting cells (APC), a prerequisite for efficient T cell adaptive immunity against pathogens. Binding of alpha-beta TR to pMH complex initiates TR-CD3 clustering on the cell surface and intracellular activation of LCK that phosphorylates the ITAM motifs of CD3G, CD3D, CD3E and CD247 enabling the recruitment of ZAP70. In turn ZAP70 phosphorylates LAT, which recruits numerous signaling molecules to form the LAT signalosome. The LAT signalosome propagates signal branching to three major signaling pathways, the calcium, the mitogen-activated protein kinase (MAPK) kinase and the nuclear factor NF-kappa-B (NF-kB) pathways, leading to the mobilization of transcription factors that are critical for gene expression and essential for T cell growth and differentiation. The T cell repertoire is generated in the thymus, by V-(D)-J rearrangement. This repertoire is then shaped by intrathymic selection events to generate a peripheral T cell pool of self-MH restricted, non-autoaggressive T cells. Post-thymic interaction of alpha-beta TR with the pMH complexes shapes TR structural and functional avidity. The polypeptide is T cell receptor beta variable 18 (Homo sapiens (Human)).